We begin with the raw amino-acid sequence, 639 residues long: Chaperone protein DnaK (639 aa).

Phosphothreonine; by autocatalysis is present on Thr-198. The segment at 602–639 (QAKSQAQGGDNADAGKQANATADDVVDAEFEEVKDDKK) is disordered. Residues 625 to 639 (DVVDAEFEEVKDDKK) are compositionally biased toward acidic residues.

The protein belongs to the heat shock protein 70 family.

In terms of biological role, acts as a chaperone. The polypeptide is Chaperone protein DnaK (Shewanella baltica (strain OS155 / ATCC BAA-1091)).